The chain runs to 108 residues: Envelope small membrane protein (108 aa).

Over 1-10 the chain is Virion surface; that stretch reads MNLLNKSLEE. A helical membrane pass occupies residues 11 to 31; it reads NGSFLTALYIIVGFLALYLLG. Residues 32–108 lie on the Intravirion side of the membrane; that stretch reads RALQAFVQAA…QDAQRDKLYS (77 aa). Positions 88–108 are disordered; it reads NGWNNKNPANFQDAQRDKLYS. A compositionally biased stretch (polar residues) spans 89–100; sequence GWNNKNPANFQD.

It belongs to the gammacoronaviruses E protein family. Homooligomer. Interacts with the M membrane protein in the budding compartment of the host cell, which is located between endoplasmic reticulum and the Golgi complex. The cytoplasmic tails of both proteins are important for this function. Interacts with Nucleoprotein.

It localises to the host Golgi apparatus membrane. Functionally, plays a central role in virus morphogenesis and assembly. Acts as a viroporin and self-assembles in host membranes forming pentameric protein-lipid pores that allow ion transport. Also plays a role in the induction of apoptosis. The sequence is that of Envelope small membrane protein from Gallus gallus (Chicken).